An 86-amino-acid chain; its full sequence is Large ribosomal subunit protein eL20 (86 aa).

Belongs to the eukaryotic ribosomal protein eL20 family. As to quaternary structure, part of the 50S ribosomal subunit. Binds 23S rRNA.

The protein is Large ribosomal subunit protein eL20 of Saccharolobus solfataricus (strain ATCC 35092 / DSM 1617 / JCM 11322 / P2) (Sulfolobus solfataricus).